The primary structure comprises 370 residues: Calcium-binding protein 1 (370 aa).

Positions 1-198 are disordered; it reads MGGGDGAAFK…GRGDSVPAAA (198 aa). Residue G2 is the site of N-myristoyl glycine attachment. G4 is lipidated: S-palmitoyl cysteine. Composition is skewed to low complexity over residues 50 to 61, 68 to 84, and 148 to 157; these read HASAGPAAMSSH, KTSLLKAAAAAASGGSR, and ALPAAASRPS. EF-hand domains are found at residues 225-260, 279-296, 302-337, and 339-370; these read EEIEELREAFREFDKDKDGYINCRDLGNCMRTMGYM, GHVDFDDFVELMGPKLLA, IGVKELRDAFREFDTNGDGEISTSELREAMRKLLGH, and VGHRDIEEIIRDVDLNGDGRVDFEEFVRMMSR. The Ca(2+) site is built by D238, D240, D242, Y244, and D249. D238, D240, D242, and Y244 together coordinate Mg(2+). Ca(2+) contacts are provided by D315, N317, D319, and E321. S323 bears the Phosphoserine mark. Residues E326, D352, L353, N354, D356, G357, R358, D360, and E363 each coordinate Ca(2+).

In terms of assembly, homodimer; when bound to calcium or magnesium. Interacts (via C-terminus) with ITPR1, ITPR2 and ITPR3. This binding is calcium dependent and the interaction correlates with calcium concentration. An additional calcium-independent interaction with the N-terminus of ITPR1 results in a decreased InsP(3) binding to the receptor. Interacts with CACNA1A (via C-terminal CDB motif) in the pre- and postsynaptic membranes. Interacts with CACNA1C (via C-terminal C and IQ motifs). The binding to the C motif is calcium independent whereas the binding to IQ requires the presence of calcium and is mutually exclusive with calmodulin binding. Interacts with CACNA1D. Interacts with TRPC5 (via C-terminus). Interacts (via EF-hands 1 and 2) at microtubules with MAP1LC3B. Interacts with MYO1C. Interacts (via EF-hands 1 and 2) with NSMF (via the central NLS-containing motif region), the interaction occurs in a calcium dependent manner after synaptic NMDA receptor stimulation and prevents nuclear import of NSMF. Interacts with SPACA9. In terms of processing, phosphorylated. The phosphorylation regulates the activity. In terms of tissue distribution, retina and brain. Somatodendritic compartment of neurons. Calbrain was found exclusively in brain where it is abundant in the hippocampus, habenular area in the epithalamus and in the cerebellum.

It is found in the cytoplasm. The protein localises to the cytoskeleton. It localises to the perinuclear region. The protein resides in the cell membrane. Its subcellular location is the golgi apparatus. It is found in the postsynaptic density. The protein localises to the cell cortex. Its function is as follows. Modulates calcium-dependent activity of inositol 1,4,5-triphosphate receptors (ITPRs). Inhibits agonist-induced intracellular calcium signaling. Enhances inactivation and does not support calcium-dependent facilitation of voltage-dependent P/Q-type calcium channels. Causes calcium-dependent facilitation and inhibits inactivation of L-type calcium channels by binding to the same sites as calmodulin in the C-terminal domain of CACNA1C, but has an opposite effect on channel function. Suppresses the calcium-dependent inactivation of CACNA1D. Inhibits TRPC5 channels. Prevents NMDA receptor-induced cellular degeneration. Required for the normal transfer of light signals through the retina. This is Calcium-binding protein 1 (CABP1) from Homo sapiens (Human).